A 130-amino-acid polypeptide reads, in one-letter code: Holo-[acyl-carrier-protein] synthase (130 aa).

D8 and E62 together coordinate Mg(2+).

This sequence belongs to the P-Pant transferase superfamily. AcpS family. Mg(2+) serves as cofactor.

The protein resides in the cytoplasm. It catalyses the reaction apo-[ACP] + CoA = holo-[ACP] + adenosine 3',5'-bisphosphate + H(+). Functionally, transfers the 4'-phosphopantetheine moiety from coenzyme A to a Ser of acyl-carrier-protein. In Variovorax paradoxus (strain S110), this protein is Holo-[acyl-carrier-protein] synthase.